The chain runs to 188 residues: dCTP deaminase (188 aa).

109–114 (KSTYAR) is a dCTP binding site. The active-site Proton donor/acceptor is Glu-135. DCTP-binding residues include Gln-154, Tyr-168, and Gln-178.

The protein belongs to the dCTP deaminase family. As to quaternary structure, homotrimer.

It carries out the reaction dCTP + H2O + H(+) = dUTP + NH4(+). Its pathway is pyrimidine metabolism; dUMP biosynthesis; dUMP from dCTP (dUTP route): step 1/2. Its function is as follows. Catalyzes the deamination of dCTP to dUTP. In Helicobacter acinonychis (strain Sheeba), this protein is dCTP deaminase.